The sequence spans 521 residues: Membrane-bound transcription factor site-2 protease (521 aa).

The Cytoplasmic segment spans residues 1–3; it reads MIP. A helical transmembrane segment spans residues 4 to 24; sequence VSLVVVVVGGWTVVYLTDLVL. Residues 25 to 74 lie on the Lumenal side of the membrane; sequence KSSVYFKHSYEDWLESNGLSISPFHIRWQTAVFNRAFYSWGRRKARMLYQ. Transmembrane regions (helical) follow at residues 75 to 95 and 96 to 107; these read WFNF…FLLG and KTLMQTLAQMMA. The Lumenal segment spans residues 108–146; that stretch reads DSPSSYSSSSSSSSSSSSSSSSSSSSSSSSSLHNEQVLQ. Positions 113–137 are disordered; it reads YSSSSSSSSSSSSSSSSSSSSSSSS. Residues 147–171 form a helical membrane-spanning segment; sequence VVVPGINLPVNQLTYFFAAVLISGV. Residue His173 coordinates Zn(2+). Glu174 is an active-site residue. 3 consecutive transmembrane segments (helical) span residues 176-188, 189-211, and 231-253; these read GHGI…QVRF, NGFG…TTHL, and FVLA…PFYY. His177 lines the Zn(2+) pocket. Over 254–448 the chain is Lumenal; it reads TGVGVLITEV…LPVVVETFVK (195 aa). A glycan (N-linked (GlcNAc...) asparagine) is linked at Asn339. Helical transmembrane passes span 449–466 and 467–478; these read YLIS…VPCF and ALDGQWILNSFL. Residues 479 to 494 are Lumenal-facing; it reads DATLTSVIGDNDVKDL. A helical transmembrane segment spans residues 495–515; that stretch reads IGFFILLGGSVLLAANVTLGL. Topologically, residues 516-521 are cytoplasmic; the sequence is WMVTAR.

Belongs to the peptidase M50A family. Zn(2+) is required as a cofactor.

It localises to the membrane. The protein localises to the cytoplasm. Its subcellular location is the golgi apparatus membrane. The enzyme catalyses Cleaves several transcription factors that are type-2 transmembrane proteins within membrane-spanning domains. Known substrates include sterol regulatory element-binding protein (SREBP) -1, SREBP-2 and forms of the transcriptional activator ATF6. SREBP-2 is cleaved at the site 477-DRSRILL-|-CVLTFLCLSFNPLTSLLQWGGA-505. The residues Asn-Pro, 11 residues distal to the site of cleavage in the membrane-spanning domain, are important for cleavage by S2P endopeptidase. Replacement of either of these residues does not prevent cleavage, but there is no cleavage if both of these residues are replaced.. Zinc metalloprotease that mediates intramembrane proteolysis of proteins such as ATF6, ATF6B, SREBF1/SREBP1 and SREBF2/SREBP2. Catalyzes the second step in the proteolytic activation of the sterol regulatory element-binding proteins (SREBPs) SREBF1/SREBP1 and SREBF2/SREBP2: cleaves SREBPs within the first transmembrane segment, thereby releasing the N-terminal segment with a portion of the transmembrane segment attached. Mature N-terminal SREBP fragments shuttle to the nucleus and activate gene transcription. Also mediates the second step in the proteolytic activation of the cyclic AMP-dependent transcription factor ATF-6 (ATF6 and ATF6B). Involved in intramembrane proteolysis during bone formation. In astrocytes and osteoblasts, upon DNA damage and ER stress, mediates the second step of the regulated intramembrane proteolytic activation of the transcription factor CREB3L1, leading to the inhibition of cell-cycle progression. The polypeptide is Membrane-bound transcription factor site-2 protease (MBTPS2) (Pongo abelii (Sumatran orangutan)).